Consider the following 348-residue polypeptide: Protein arginine N-methyltransferase 1 (348 aa).

Residues 24–342 enclose the SAM-dependent MTase PRMT-type domain; sequence KDYYFDSYAH…KGEVCDLNEQ (319 aa). The S-adenosyl-L-methionine site is built by His37, Arg46, Gly70, Glu92, and Glu121. Residues Glu139 and Glu148 contribute to the active site.

It belongs to the class I-like SAM-binding methyltransferase superfamily. Protein arginine N-methyltransferase family. Interacts with daf-16. Interacts with pgl-1 and pgl-3. Interacts with alg-1. As to expression, widely expressed in pharyngeal, body wall muscle, intestinal and vulval cells.

It localises to the cytoplasm. The protein localises to the nucleus. It carries out the reaction L-arginyl-[protein] + 2 S-adenosyl-L-methionine = N(omega),N(omega)-dimethyl-L-arginyl-[protein] + 2 S-adenosyl-L-homocysteine + 2 H(+). It catalyses the reaction L-arginyl-[protein] + S-adenosyl-L-methionine = N(omega)-methyl-L-arginyl-[protein] + S-adenosyl-L-homocysteine + H(+). In terms of biological role, arginine methyltransferase that methylates (mono and asymmetric dimethylation) the guanidino nitrogens of arginyl residues present in target proteins. Catalyzes the formation of monomethylarginine and asymmetric dimethylarginine on histones H2A and H4, a specific tag for epigenetic transcriptional activation. Catalyzes asymmetric arginine dimethylation of mitochondrial proteins necessary for mitochondrial oxidative phosphorylation activity and thus aerobic respiration and ATP synthesis, and the mitochondrial stress response. Methylates arginine residues in P-granule components pgl-1 and pgl-3 to promote P-granule degradation by autophagy in somatic cells to ensure exclusive localization of the P-granules in germ cells. Modulates the interaction of P-granule proteins epg-2 and sepa-1. Methylates arginine residues in daf-16, which blocks ftt-2 binding to daf-16, prevents akt-mediated phosphorylation and allows for daf-16 to translocate to the nucleus. In turn, association with daf-16 therefore allows for the transcriptional activation of daf-16 and regulation of longevity-related genes. Maintains lifespan by modulating daf-16 activity downstream of the daf-2 signaling pathway. Plays a role in heat and oxidative stress resistance. Role in stress resistance and also fat storage may be in association with the daf-2 signaling pathway. Required for normal feeding behavior. The sequence is that of Protein arginine N-methyltransferase 1 from Caenorhabditis elegans.